We begin with the raw amino-acid sequence, 839 residues long: Valine--tRNA ligase (839 aa).

The short motif at 41-51 is the 'HIGH' region element; that stretch reads PNVTGKLHIGH. The stretch at 315-343 forms a coiled coil; that stretch reads RENIVLKLKKENLIDKIENIKSNIIMSER. The 'KMSKS' region motif lies at 517–521; the sequence is KMSKS. Residue Lys520 coordinates ATP. A coiled-coil region spans residues 813 to 839; the sequence is INNASEIKVKEEKEKLEKYIKEFEEIK.

This sequence belongs to the class-I aminoacyl-tRNA synthetase family. ValS type 1 subfamily. As to quaternary structure, monomer.

The protein resides in the cytoplasm. It carries out the reaction tRNA(Val) + L-valine + ATP = L-valyl-tRNA(Val) + AMP + diphosphate. In terms of biological role, catalyzes the attachment of valine to tRNA(Val). As ValRS can inadvertently accommodate and process structurally similar amino acids such as threonine, to avoid such errors, it has a 'posttransfer' editing activity that hydrolyzes mischarged Thr-tRNA(Val) in a tRNA-dependent manner. This is Valine--tRNA ligase from Mycoplasma mobile (strain ATCC 43663 / 163K / NCTC 11711) (Mesomycoplasma mobile).